The following is a 404-amino-acid chain: Probable tRNA sulfurtransferase (404 aa).

Residues 60–165 form the THUMP domain; sequence EEVIPKLSKV…KDAAYLSYET (106 aa). ATP is bound by residues 183-184, 208-209, Arg-265, Gly-287, and Gln-296; these read ML and HF.

The protein belongs to the ThiI family.

It is found in the cytoplasm. It catalyses the reaction [ThiI sulfur-carrier protein]-S-sulfanyl-L-cysteine + a uridine in tRNA + 2 reduced [2Fe-2S]-[ferredoxin] + ATP + H(+) = [ThiI sulfur-carrier protein]-L-cysteine + a 4-thiouridine in tRNA + 2 oxidized [2Fe-2S]-[ferredoxin] + AMP + diphosphate. The enzyme catalyses [ThiS sulfur-carrier protein]-C-terminal Gly-Gly-AMP + S-sulfanyl-L-cysteinyl-[cysteine desulfurase] + AH2 = [ThiS sulfur-carrier protein]-C-terminal-Gly-aminoethanethioate + L-cysteinyl-[cysteine desulfurase] + A + AMP + 2 H(+). The protein operates within cofactor biosynthesis; thiamine diphosphate biosynthesis. Catalyzes the ATP-dependent transfer of a sulfur to tRNA to produce 4-thiouridine in position 8 of tRNAs, which functions as a near-UV photosensor. Also catalyzes the transfer of sulfur to the sulfur carrier protein ThiS, forming ThiS-thiocarboxylate. This is a step in the synthesis of thiazole, in the thiamine biosynthesis pathway. The sulfur is donated as persulfide by IscS. This Enterococcus faecalis (strain ATCC 700802 / V583) protein is Probable tRNA sulfurtransferase.